Here is a 156-residue protein sequence, read N- to C-terminus: Small ribosomal subunit protein uS7 (156 aa).

This sequence belongs to the universal ribosomal protein uS7 family. In terms of assembly, part of the 30S ribosomal subunit. Contacts proteins S9 and S11.

Functionally, one of the primary rRNA binding proteins, it binds directly to 16S rRNA where it nucleates assembly of the head domain of the 30S subunit. Is located at the subunit interface close to the decoding center, probably blocks exit of the E-site tRNA. This Deinococcus deserti (strain DSM 17065 / CIP 109153 / LMG 22923 / VCD115) protein is Small ribosomal subunit protein uS7.